The following is a 245-amino-acid chain: Flavin-dependent thymidylate synthase (245 aa).

A ThyX domain is found at Ile-5–Lys-210. FAD contacts are provided by residues Ser-59, Arg-83–Arg-85, and Gln-91. Residues Gln-80–Arg-83, Gln-91–Arg-95, and Arg-149 each bind dUMP. Positions Arg-83–Ser-93 match the ThyX motif motif. Residues Asn-165–Arg-167 and His-171 contribute to the FAD site. A dUMP-binding site is contributed by Arg-176. The Involved in ionization of N3 of dUMP, leading to its activation role is filled by Arg-176.

The protein belongs to the thymidylate synthase ThyX family. In terms of assembly, homotetramer. FAD is required as a cofactor.

It catalyses the reaction dUMP + (6R)-5,10-methylene-5,6,7,8-tetrahydrofolate + NADPH + H(+) = dTMP + (6S)-5,6,7,8-tetrahydrofolate + NADP(+). It participates in pyrimidine metabolism; dTTP biosynthesis. Catalyzes the reductive methylation of 2'-deoxyuridine-5'-monophosphate (dUMP) to 2'-deoxythymidine-5'-monophosphate (dTMP) while utilizing 5,10-methylenetetrahydrofolate (mTHF) as the methyl donor, and NADPH and FADH(2) as the reductant. In Thermococcus onnurineus (strain NA1), this protein is Flavin-dependent thymidylate synthase.